A 239-amino-acid polypeptide reads, in one-letter code: Ribosomal RNA small subunit methyltransferase G (239 aa).

S-adenosyl-L-methionine-binding positions include glycine 78, phenylalanine 83, 129–130 (AE), and arginine 148.

Belongs to the methyltransferase superfamily. RNA methyltransferase RsmG family.

The protein resides in the cytoplasm. Specifically methylates the N7 position of a guanine in 16S rRNA. In Clostridium tetani (strain Massachusetts / E88), this protein is Ribosomal RNA small subunit methyltransferase G.